Reading from the N-terminus, the 251-residue chain is DNA repair protein RecO (251 aa).

It belongs to the RecO family.

Involved in DNA repair and RecF pathway recombination. This is DNA repair protein RecO from Lactococcus lactis subsp. cremoris (strain SK11).